The chain runs to 159 residues: Testis-specific XK-related protein, Y-linked (159 aa).

3 helical membrane-spanning segments follow: residues 1–21, 45–65, and 72–92; these read MFIF…VGAI, IYLM…LAFF, and GSLH…WLEF.

This sequence belongs to the XK family. Testis specific.

It localises to the membrane. This chain is Testis-specific XK-related protein, Y-linked (XKRY), found in Homo sapiens (Human).